A 95-amino-acid polypeptide reads, in one-letter code: Aspartyl/glutamyl-tRNA(Asn/Gln) amidotransferase subunit C (95 aa).

The protein belongs to the GatC family. Heterotrimer of A, B and C subunits.

The catalysed reaction is L-glutamyl-tRNA(Gln) + L-glutamine + ATP + H2O = L-glutaminyl-tRNA(Gln) + L-glutamate + ADP + phosphate + H(+). The enzyme catalyses L-aspartyl-tRNA(Asn) + L-glutamine + ATP + H2O = L-asparaginyl-tRNA(Asn) + L-glutamate + ADP + phosphate + 2 H(+). In terms of biological role, allows the formation of correctly charged Asn-tRNA(Asn) or Gln-tRNA(Gln) through the transamidation of misacylated Asp-tRNA(Asn) or Glu-tRNA(Gln) in organisms which lack either or both of asparaginyl-tRNA or glutaminyl-tRNA synthetases. The reaction takes place in the presence of glutamine and ATP through an activated phospho-Asp-tRNA(Asn) or phospho-Glu-tRNA(Gln). In Gluconobacter oxydans (strain 621H) (Gluconobacter suboxydans), this protein is Aspartyl/glutamyl-tRNA(Asn/Gln) amidotransferase subunit C.